Here is a 437-residue protein sequence, read N- to C-terminus: FK506-binding protein 3 (437 aa).

3 stretches are compositionally biased toward acidic residues: residues 73 to 90 (DIEA…EEEE), 106 to 131 (EEEE…EDVS), and 179 to 220 (ADED…DASD). Disordered stretches follow at residues 73–132 (DIEA…DVSE) and 169–349 (HLTG…QTAK). 2 stretches are compositionally biased toward basic and acidic residues: residues 256 to 270 (KKED…KDLE) and 292 to 324 (AKKE…EASK). The region spanning 351–437 (GNKVGIRYIG…TFDIKLVSIK (87 aa)) is the PPIase FKBP-type domain.

It belongs to the FKBP-type PPIase family. FKBP3/4 subfamily.

It is found in the nucleus. The protein resides in the nucleolus. The enzyme catalyses [protein]-peptidylproline (omega=180) = [protein]-peptidylproline (omega=0). Inhibited by both FK506 and rapamycin. PPIases accelerate the folding of proteins. It catalyzes the cis-trans isomerization of proline imidic peptide bonds in oligopeptides. The sequence is that of FK506-binding protein 3 (FPR3) from Debaryomyces hansenii (strain ATCC 36239 / CBS 767 / BCRC 21394 / JCM 1990 / NBRC 0083 / IGC 2968) (Yeast).